The chain runs to 170 residues: Shikimate kinase (170 aa).

Gly-11–Thr-16 contributes to the ATP binding site. Thr-15 is a binding site for Mg(2+). Substrate contacts are provided by Asp-33, Arg-57, and Gly-80. Arg-119 is a binding site for ATP. Arg-141 is a binding site for substrate.

This sequence belongs to the shikimate kinase family. Monomer. It depends on Mg(2+) as a cofactor.

The protein localises to the cytoplasm. The enzyme catalyses shikimate + ATP = 3-phosphoshikimate + ADP + H(+). It participates in metabolic intermediate biosynthesis; chorismate biosynthesis; chorismate from D-erythrose 4-phosphate and phosphoenolpyruvate: step 5/7. Functionally, catalyzes the specific phosphorylation of the 3-hydroxyl group of shikimic acid using ATP as a cosubstrate. The sequence is that of Shikimate kinase from Azobacteroides pseudotrichonymphae genomovar. CFP2.